Consider the following 360-residue polypeptide: Protein Wnt-2 (360 aa).

The first 25 residues, 1 to 25 (MNSPLRGIWLWLPLLLTWLTPEVSS), serve as a signal peptide directing secretion. 11 disulfide bridges follow: Cys76–Cys87, Cys127–Cys135, Cys137–Cys157, Cys206–Cys220, Cys208–Cys215, Cys278–Cys309, Cys294–Cys304, Cys308–Cys348, Cys324–Cys339, Cys326–Cys336, and Cys331–Cys332. The O-palmitoleoyl serine; by PORCN moiety is linked to residue Ser212. Asn295 carries an N-linked (GlcNAc...) asparagine glycan.

This sequence belongs to the Wnt family. In terms of processing, palmitoleoylation is required for efficient binding to frizzled receptors. Depalmitoleoylation leads to Wnt signaling pathway inhibition.

It localises to the secreted. The protein resides in the extracellular space. The protein localises to the extracellular matrix. Its function is as follows. Ligand for members of the frizzled family of seven transmembrane receptors. Probable developmental protein. May be a signaling molecule which affects the development of discrete regions of tissues. Is likely to signal over only few cell diameters. This chain is Protein Wnt-2 (WNT2), found in Ateles geoffroyi (Black-handed spider monkey).